The chain runs to 657 residues: Probable serine/threonine-protein kinase CA_C1728 (657 aa).

One can recognise a Protein kinase domain in the interval 10–274 (YKIEEEIGVG…ELSNVKNNYV (265 aa)). ATP is bound by residues 16–24 (IGVGGTAVV) and lysine 39. Aspartate 143 functions as the Proton acceptor in the catalytic mechanism. The interval 286–334 (PAQIQNESNPNNKLDNDDTYYNGEPYNKEQPQEEPQEENEEPKNKIKGN) is disordered. Polar residues predominate over residues 288–298 (QIQNESNPNNK). 3 consecutive PASTA domains span residues 375-441 (SVSK…DISS), 443-509 (DTDQ…VISR), and 512-577 (EVKK…VIGR). Residues 581–657 (TAVQPPNNNN…TNTPNGTGQK (77 aa)) form a disordered region. 3 stretches are compositionally biased toward low complexity: residues 584–600 (QPPN…QNQN), 613–637 (PTGG…PAGG), and 645–657 (GNVT…TGQK).

This sequence belongs to the protein kinase superfamily. Ser/Thr protein kinase family.

It carries out the reaction L-seryl-[protein] + ATP = O-phospho-L-seryl-[protein] + ADP + H(+). It catalyses the reaction L-threonyl-[protein] + ATP = O-phospho-L-threonyl-[protein] + ADP + H(+). The protein is Probable serine/threonine-protein kinase CA_C1728 of Clostridium acetobutylicum (strain ATCC 824 / DSM 792 / JCM 1419 / IAM 19013 / LMG 5710 / NBRC 13948 / NRRL B-527 / VKM B-1787 / 2291 / W).